We begin with the raw amino-acid sequence, 88 residues long: Small ribosomal subunit protein uS15 (88 aa).

The segment covering 1 to 12 (MLTNTDRQQVIA) has biased composition (polar residues). The disordered stretch occupies residues 1–23 (MLTNTDRQQVIAQYQRAPGDTGS).

The protein belongs to the universal ribosomal protein uS15 family. Part of the 30S ribosomal subunit. Forms a bridge to the 50S subunit in the 70S ribosome, contacting the 23S rRNA.

Functionally, one of the primary rRNA binding proteins, it binds directly to 16S rRNA where it helps nucleate assembly of the platform of the 30S subunit by binding and bridging several RNA helices of the 16S rRNA. In terms of biological role, forms an intersubunit bridge (bridge B4) with the 23S rRNA of the 50S subunit in the ribosome. The protein is Small ribosomal subunit protein uS15 of Psychrobacter sp. (strain PRwf-1).